A 132-amino-acid polypeptide reads, in one-letter code: Large ribosomal subunit protein bL17 (132 aa).

The protein belongs to the bacterial ribosomal protein bL17 family. In terms of assembly, part of the 50S ribosomal subunit. Contacts protein L32.

In Cellvibrio japonicus (strain Ueda107) (Pseudomonas fluorescens subsp. cellulosa), this protein is Large ribosomal subunit protein bL17.